The sequence spans 171 residues: Co-chaperone protein HscB homolog (171 aa).

In terms of domain architecture, J spans 2-74 (NHFELFGLPS…ISRAEYILAE (73 aa)).

It belongs to the HscB family. Interacts with HscA and stimulates its ATPase activity.

Its function is as follows. Co-chaperone involved in the maturation of iron-sulfur cluster-containing proteins. Seems to help targeting proteins to be folded toward HscA. This Vibrio campbellii (strain ATCC BAA-1116) protein is Co-chaperone protein HscB homolog.